The following is a 263-amino-acid chain: Protein maestro (263 aa).

The tract at residues 1–21 is disordered; sequence MDQTPRRMLGQPLSSPATQPK. The HEAT repeat unit spans residues 128–163; the sequence is SFFIDITLQTRTLLDDENDSLRYSAFVLFGQLADLA.

It localises to the nucleus. Its subcellular location is the nucleolus. In Bos taurus (Bovine), this protein is Protein maestro (MRO).